The chain runs to 436 residues: Acetyl-CoA decarbonylase/synthase complex subunit delta (436 aa).

This sequence belongs to the CdhD family. Heterodimer of delta and gamma chains. The ACDS complex is made up of alpha, epsilon, beta, gamma and delta chains with a probable stoichiometry of (alpha(2)epsilon(2))(4)-beta(8)-(gamma(1)delta(1))(8).

The protein operates within one-carbon metabolism; methanogenesis from acetate. Functionally, part of a complex that catalyzes the reversible cleavage of acetyl-CoA, allowing growth on acetate as sole source of carbon and energy. Probably maintains the overall quaternary structure of the ACDS complex. This Methanosarcina mazei (strain ATCC BAA-159 / DSM 3647 / Goe1 / Go1 / JCM 11833 / OCM 88) (Methanosarcina frisia) protein is Acetyl-CoA decarbonylase/synthase complex subunit delta.